The chain runs to 406 residues: Eukaryotic initiation factor 4A-I (406 aa).

A disordered region spans residues 1 to 21 (MSASQDSRSRDNGPDGMEPEG). Ser-2 carries the post-translational modification N-acetylserine. Residue Ser-4 is modified to Phosphoserine. The Q motif signature appears at 32 to 60 (DSLDDMNLSESLLRGIYAYGFEKPSAIQQ). The Helicase ATP-binding domain occupies 63 to 234 (ILSCIKGYDV…KKFMRDPIRI (172 aa)). 76–83 (AQSGTGKT) serves as a coordination point for ATP. N6-acetyllysine is present on Lys-118. Residue Lys-146 forms a Glycyl lysine isopeptide (Lys-Gly) (interchain with G-Cter in SUMO2) linkage. A Phosphothreonine modification is found at Thr-158. Lys-174 bears the N6-acetyllysine mark. A DEAD box motif is present at residues 182-185 (DEAD). Lys-193 bears the N6-acetyllysine mark. Lys-225 participates in a covalent cross-link: Glycyl lysine isopeptide (Lys-Gly) (interchain with G-Cter in SUMO2). Lys-238 is modified (N6-acetyllysine; alternate). A Glycyl lysine isopeptide (Lys-Gly) (interchain with G-Cter in SUMO2); alternate cross-link involves residue Lys-238. In terms of domain architecture, Helicase C-terminal spans 245-406 (GIRQFYINVE…EMPLNVADLI (162 aa)). Residues Lys-309, Lys-369, and Lys-381 each participate in a glycyl lysine isopeptide (Lys-Gly) (interchain with G-Cter in SUMO2) cross-link.

Belongs to the DEAD box helicase family. eIF4A subfamily. EIF4F is a multi-subunit complex, the composition of which varies with external and internal environmental conditions. It is composed of at least EIF4A, EIF4E and EIF4G1/EIF4G3. Interacts with PAIP1, EIF4E and UPF2. Found in a complex with XPO7, EIF4A1, ARHGAP1, VPS26A, VPS29, VPS35 and SFN. May interact with NOM1. Interacts with PDCD4; this interferes with the interaction between EIF4A and EIF4G. Interacts with RBM4. Interacts with DDX3X in an RNA-independent manner. Interacts with PKP1 (via N-terminus); the interaction promotes EIF4A1 recruitment to the cap-dependent translation complex and EIF4A1 ATPase activity.

It localises to the cytoplasm. It is found in the perinuclear region. The protein localises to the cell membrane. The protein resides in the stress granule. It carries out the reaction ATP + H2O = ADP + phosphate + H(+). In terms of biological role, ATP-dependent RNA helicase which is a subunit of the eIF4F complex involved in cap recognition and is required for mRNA binding to ribosome. In the current model of translation initiation, eIF4A unwinds RNA secondary structures in the 5'-UTR of mRNAs which is necessary to allow efficient binding of the small ribosomal subunit, and subsequent scanning for the initiator codon. As a result, promotes cell proliferation and growth. The chain is Eukaryotic initiation factor 4A-I (EIF4A1) from Pongo abelii (Sumatran orangutan).